Here is a 1026-residue protein sequence, read N- to C-terminus: Multidrug resistance protein MdtC (1026 aa).

Residues 1 to 6 (MRFFAL) lie on the Cytoplasmic side of the membrane. Residues 7-29 (FIYRPVATILIAAAITLCGILGF) form a helical membrane-spanning segment. Over 30 to 335 (RLLPVAPLPQ…TIRASLQEVE (306 aa)) the chain is Periplasmic. The chain crosses the membrane as a helical span at residues 336–353 (ETLAISVALVILVVFLFL). At 354–359 (RSGRAT) the chain is on the cytoplasmic side. The chain crosses the membrane as a helical span at residues 360-379 (LIPAVAVPVSLIGTFAAMYL). Residues 380–388 (CGFSLNNLS) are Periplasmic-facing. The chain crosses the membrane as a helical span at residues 389–411 (LMALTIATGFVVDDAIVVLENIA). At 412 to 430 (RHLEARMKPLQAALQGTRE) the chain is on the cytoplasmic side. The helical transmembrane segment at 431–453 (VGFTVISMSLSLVAVFLPLLLMG) threads the bilayer. The Periplasmic segment spans residues 454–467 (GLPGRLLREFAVTL). The chain crosses the membrane as a helical span at residues 468 to 490 (SVAIGISLVVSLTLTPMMCGWML). The Cytoplasmic portion of the chain corresponds to 491 to 852 (KSSKPRTQPR…QVFQQTMNSQ (362 aa)). A helical membrane pass occupies residues 853-875 (LILIVAAIATVYIVLGILYESYV). At 876–894 (HPLTILSTLPSAGVGALLA) the chain is on the periplasmic side. The helical transmembrane segment at 895–917 (LELFNAPFSLIALIGIMLLIGIV) threads the bilayer. Topologically, residues 918 to 947 (KKNAIMMVDFALEAQRSGGLTPEQAIFQAC) are cytoplasmic. A helical membrane pass occupies residues 948–970 (LLRFRPIMMTTLAALFGALPLVL). The Periplasmic portion of the chain corresponds to 971–984 (SGGDGSELRQPLGI). The chain crosses the membrane as a helical span at residues 985-1007 (TIVGGLVMSQLLTLYTTPVVYLF). Topologically, residues 1008 to 1026 (FDRLRLRFSRKNSKPVVEI) are cytoplasmic.

It belongs to the resistance-nodulation-cell division (RND) (TC 2.A.6) family. MdtC subfamily. In terms of assembly, part of a tripartite efflux system composed of MdtA, MdtB and MdtC. MdtC forms a heteromultimer with MdtB.

The protein localises to the cell inner membrane. The sequence is that of Multidrug resistance protein MdtC from Salmonella typhi.